Here is a 115-residue protein sequence, read N- to C-terminus: Toxin CSTX-9 (115 aa).

The signal sequence occupies residues 1 to 20; that stretch reads MKVLVICAVLFLAIFSNSSA. Residues 21 to 47 constitute a propeptide that is removed on maturation; the sequence is ETEDDFLEDESFEADDVIPFLAREQVR. Disulfide bonds link cysteine 53–cysteine 68, cysteine 60–cysteine 77, cysteine 67–cysteine 95, and cysteine 79–cysteine 93.

Belongs to the neurotoxin 19 (CSTX) family. Monomer. Interacts with CSTX-13 (AC P83919) (Kd=370 nM), but does not interact with CSTX-1 (AC P81694). As to expression, expressed by the venom gland.

The protein resides in the secreted. It is found in the target cell membrane. Synergistic toxin that induces or increases a cytolytic effect when combined with CSTX-1 (AC P81694) or CSTX-13 (AC P83919). Potassium ions and M-ctenitoxin-Cs1a (AC P83619) have also an effect on its activity. When alone, has no insecticidal activity. In Cupiennius salei (American wandering spider), this protein is Toxin CSTX-9.